Reading from the N-terminus, the 99-residue chain is Protein SPIRAL1-like 5 (99 aa).

A compositionally biased stretch (gly residues) spans 1 to 12 (MSRGGSFGGGQS). The interval 1–99 (MSRGGSFGGG…SSLGYLFGDK (99 aa)) is disordered. A compositionally biased stretch (pro residues) spans 27–39 (TPAPPVAPKPAPP). Residues 56–73 (KISNNNYQRVQGQNSGNF) show a composition bias toward polar residues. Serine 58 carries the post-translational modification Phosphoserine.

This sequence belongs to the SPIRAL1 family. As to expression, expressed exclusively in stems and flowers.

Its function is as follows. Acts redundantly with SPR1 in maintaining the cortical microtubules organization essential for anisotropic cell growth. The protein is Protein SPIRAL1-like 5 (SP1L5) of Arabidopsis thaliana (Mouse-ear cress).